The primary structure comprises 246 residues: tRNA pseudouridine synthase A (246 aa).

The Nucleophile role is filled by aspartate 52. Residue tyrosine 111 coordinates substrate.

The protein belongs to the tRNA pseudouridine synthase TruA family. As to quaternary structure, homodimer.

It carries out the reaction uridine(38/39/40) in tRNA = pseudouridine(38/39/40) in tRNA. Formation of pseudouridine at positions 38, 39 and 40 in the anticodon stem and loop of transfer RNAs. This Ehrlichia ruminantium (strain Welgevonden) protein is tRNA pseudouridine synthase A.